We begin with the raw amino-acid sequence, 242 residues long: Small ribosomal subunit protein eS1 (242 aa).

The protein belongs to the eukaryotic ribosomal protein eS1 family. In terms of assembly, component of the small ribosomal subunit. Mature ribosomes consist of a small (40S) and a large (60S) subunit. The 40S subunit contains about 33 different proteins and 1 molecule of RNA (18S). The 60S subunit contains about 49 different proteins and 3 molecules of RNA (25S, 5.8S and 5S).

Its subcellular location is the cytoplasm. In Lodderomyces elongisporus (strain ATCC 11503 / CBS 2605 / JCM 1781 / NBRC 1676 / NRRL YB-4239) (Yeast), this protein is Small ribosomal subunit protein eS1.